The primary structure comprises 647 residues: Macrolide export ATP-binding/permease protein MacB (647 aa).

The region spanning 5–243 is the ABC transporter domain; it reads LELKGIERSY…TQTPSLTSKI (239 aa). Position 41 to 48 (41 to 48) interacts with ATP; that stretch reads GASGSGKS. 4 helical membrane passes run 272–292, 522–542, 576–596, and 610–630; these read LLTM…LVIG, LFLT…VMNI, ILVC…IAFI, and PIAL…FGFL.

Belongs to the ABC transporter superfamily. Macrolide exporter (TC 3.A.1.122) family. In terms of assembly, homodimer. Part of the tripartite efflux system MacAB-TolC, which is composed of an inner membrane transporter, MacB, a periplasmic membrane fusion protein, MacA, and an outer membrane component, TolC. The complex forms a large protein conduit and can translocate molecules across both the inner and outer membranes. Interacts with MacA.

The protein localises to the cell inner membrane. In terms of biological role, part of the tripartite efflux system MacAB-TolC. MacB is a non-canonical ABC transporter that contains transmembrane domains (TMD), which form a pore in the inner membrane, and an ATP-binding domain (NBD), which is responsible for energy generation. Confers resistance against macrolides. The protein is Macrolide export ATP-binding/permease protein MacB of Photorhabdus laumondii subsp. laumondii (strain DSM 15139 / CIP 105565 / TT01) (Photorhabdus luminescens subsp. laumondii).